A 303-amino-acid polypeptide reads, in one-letter code: Bifunctional protein FolD 2 (303 aa).

NADP(+) contacts are provided by residues 169–171 (GRS), S194, and I235.

It belongs to the tetrahydrofolate dehydrogenase/cyclohydrolase family. Homodimer.

It carries out the reaction (6R)-5,10-methylene-5,6,7,8-tetrahydrofolate + NADP(+) = (6R)-5,10-methenyltetrahydrofolate + NADPH. The enzyme catalyses (6R)-5,10-methenyltetrahydrofolate + H2O = (6R)-10-formyltetrahydrofolate + H(+). Its pathway is one-carbon metabolism; tetrahydrofolate interconversion. Its function is as follows. Catalyzes the oxidation of 5,10-methylenetetrahydrofolate to 5,10-methenyltetrahydrofolate and then the hydrolysis of 5,10-methenyltetrahydrofolate to 10-formyltetrahydrofolate. This chain is Bifunctional protein FolD 2, found in Ectopseudomonas mendocina (strain ymp) (Pseudomonas mendocina).